Here is a 351-residue protein sequence, read N- to C-terminus: Rhodopsin (351 aa).

Residues 1-36 (MNGTEGPFFYIPMVNTTGIVRSPYEYPQYYLVNPAA) lie on the Extracellular side of the membrane. N2 and N15 each carry an N-linked (GlcNAc...) asparagine glycan. The helical transmembrane segment at 37-61 (YAILGAYMFFLIIVGFPVNFMTLYV) threads the bilayer. Topologically, residues 62-73 (TLEHKKLRTPLN) are cytoplasmic. The chain crosses the membrane as a helical span at residues 74 to 96 (YILLNLAVADLFMVIGGFTTTMY). Topologically, residues 97–110 (TSMHGYFVLGRLGC) are extracellular. A disulfide bridge connects residues C110 and C187. A helical membrane pass occupies residues 111-133 (NLEGFFATLGGMISLWSLAVLAI). Positions 134–136 (ERW) match the 'Ionic lock' involved in activated form stabilization motif. At 134–152 (ERWVVVCKPISNFRFGENH) the chain is on the cytoplasmic side. The helical transmembrane segment at 153–173 (AIMGVSLTWGMALACTVPPLV) threads the bilayer. The Extracellular portion of the chain corresponds to 174-202 (GWSRYIPEGMQCSCGIDYYTRAEGFNNES). A glycan (N-linked (GlcNAc...) asparagine) is linked at N200. Residues 203–224 (FVLYMFFCHFTIPLTIIFFCYG) traverse the membrane as a helical segment. Residues 225-252 (RLLCAVKEAAAAQQESETTQRAEREVTR) lie on the Cytoplasmic side of the membrane. A helical transmembrane segment spans residues 253 to 274 (MVIIMVIGFLVCWLPYASVAWF). At 275-286 (IFTHQGSEFGPL) the chain is on the extracellular side. Residues 287–308 (FMTIPAFFAKSSSIYNPMIYIC) form a helical membrane-spanning segment. K296 carries the post-translational modification N6-(retinylidene)lysine. Residues 309–351 (MNKQFRHCMITTLFCGKNPFEGEEEGASSTKTEASSASSVSPA) lie on the Cytoplasmic side of the membrane. The S-palmitoyl cysteine moiety is linked to residue C323. A disordered region spans residues 330–351 (GEEEGASSTKTEASSASSVSPA). The segment covering 335–351 (ASSTKTEASSASSVSPA) has biased composition (low complexity).

The protein belongs to the G-protein coupled receptor 1 family. Opsin subfamily. Phosphorylated on some or all of the serine and threonine residues present in the C-terminal region. In terms of processing, contains one covalently linked retinal chromophore.

Its subcellular location is the membrane. The protein resides in the cell projection. It localises to the cilium. The protein localises to the photoreceptor outer segment. Its function is as follows. Photoreceptor required for image-forming vision at low light intensity. While most salt water fish species use retinal as chromophore, most freshwater fish use 3-dehydroretinal, or a mixture of retinal and 3-dehydroretinal. Light-induced isomerization of 11-cis to all-trans retinal triggers a conformational change that activates signaling via G-proteins. Subsequent receptor phosphorylation mediates displacement of the bound G-protein alpha subunit by arrestin and terminates signaling. The polypeptide is Rhodopsin (rho) (Sargocentron diadema (Crown squirrelfish)).